Consider the following 357-residue polypeptide: Protein RecA (357 aa).

Residue G71–T78 participates in ATP binding.

Belongs to the RecA family.

It localises to the cytoplasm. Its function is as follows. Can catalyze the hydrolysis of ATP in the presence of single-stranded DNA, the ATP-dependent uptake of single-stranded DNA by duplex DNA, and the ATP-dependent hybridization of homologous single-stranded DNAs. It interacts with LexA causing its activation and leading to its autocatalytic cleavage. The polypeptide is Protein RecA (Ehrlichia ruminantium (strain Gardel)).